A 301-amino-acid chain; its full sequence is NAD kinase (301 aa).

Asp73 functions as the Proton acceptor in the catalytic mechanism. NAD(+) contacts are provided by residues 73-74 (DG), 151-152 (ND), Arg179, Asp181, 192-197 (TAYALS), Ala216, and Gln250.

It belongs to the NAD kinase family. A divalent metal cation is required as a cofactor.

The protein localises to the cytoplasm. It catalyses the reaction NAD(+) + ATP = ADP + NADP(+) + H(+). Involved in the regulation of the intracellular balance of NAD and NADP, and is a key enzyme in the biosynthesis of NADP. Catalyzes specifically the phosphorylation on 2'-hydroxyl of the adenosine moiety of NAD to yield NADP. This chain is NAD kinase, found in Methylibium petroleiphilum (strain ATCC BAA-1232 / LMG 22953 / PM1).